The sequence spans 373 residues: UPF0725 protein At1g23950 (373 aa).

Thr2 bears the N-acetylthreonine mark.

This sequence belongs to the UPF0725 (EMB2204) family.

This is UPF0725 protein At1g23950 from Arabidopsis thaliana (Mouse-ear cress).